A 285-amino-acid chain; its full sequence is Polyamine aminopropyltransferase (285 aa).

One can recognise a PABS domain in the interval 5-241; the sequence is DNWYIEHFQP…GWWSVTMASK (237 aa). Q35 contributes to the S-methyl-5'-thioadenosine binding site. 2 residues coordinate spermidine: H66 and D90. Residues D110 and 141–142 each bind S-methyl-5'-thioadenosine; that span reads DG. Catalysis depends on D160, which acts as the Proton acceptor. 160 to 163 contributes to the spermidine binding site; the sequence is DSTD. Position 167 (P167) interacts with S-methyl-5'-thioadenosine.

Belongs to the spermidine/spermine synthase family. Homodimer or homotetramer.

Its subcellular location is the cytoplasm. The catalysed reaction is S-adenosyl 3-(methylsulfanyl)propylamine + putrescine = S-methyl-5'-thioadenosine + spermidine + H(+). It participates in amine and polyamine biosynthesis; spermidine biosynthesis; spermidine from putrescine: step 1/1. Its function is as follows. Catalyzes the irreversible transfer of a propylamine group from the amino donor S-adenosylmethioninamine (decarboxy-AdoMet) to putrescine (1,4-diaminobutane) to yield spermidine. The polypeptide is Polyamine aminopropyltransferase (Xanthomonas axonopodis pv. citri (strain 306)).